A 3110-amino-acid chain; its full sequence is Huntingtin (3110 aa).

The tract at residues 1 to 58 (MKAFESLKSFQQQQQQQQPPPQPPPPPPPPPQPPQPPPQGQPPPPPPLPGPAEEPLHR) is disordered. K2 is subject to N6-acetyllysine. Over residues 18 to 52 (QPPPQPPPPPPPPPQPPQPPPQGQPPPPPPLPGPA) the composition is skewed to pro residues. N6-acetyllysine occurs at positions 146 and 204. 2 HEAT repeats span residues 174–211 (PYLVNLLPCLTRTSKRPEESVQETLAAAVPKIMASFGN) and 216–253 (NEIKVLLKAFIANLKSSSPTVRRTAAGSAVSICQHSRR). K313 is subject to N6-acetyllysine. Residues S387, S389, and S402 each carry the phosphoserine modification. K412 bears the N6-acetyllysine mark. The interval 462 to 473 (GHDIITEQPRSQ) is interaction with ZDHHC17. Residues 487-549 (DLTSAATDGD…PDSAVTPSDS (63 aa)) are disordered. Over residues 521–549 (DGTQASSPISDSSQTTTEGPDSAVTPSDS) the composition is skewed to polar residues. G522 is lipidated: N-myristoyl glycine. S611 and S614 each carry phosphoserine. HEAT repeat units lie at residues 773-810 (FSLVDCIPLLQKTLKDESSVTCKLACTAVRHCVLSLCS) and 873-911 (KLQERVLNNVVIYLLGDEDPRVRHVAATTLTRLVPKLFY). The interval 1137–1195 (KAALPSLTNPPSLSPIRRKGKEKEPGEQTSTPMSPKKGGEASTASRQSDTSGPVTASKS) is disordered. Positions 1140-1151 (LPSLTNPPSLSP) are enriched in low complexity. Phosphoserine; by CDK5 is present on residues S1150 and S1170. The segment covering 1178–1195 (STASRQSDTSGPVTASKS) has biased composition (polar residues). One copy of the HEAT 5 repeat lies at 1395 to 1432 (LFEPLVIKALKQYTTTTSVQLQKQVLDLLAQLVQLRVN). S1845 carries the post-translational modification Phosphoserine. The Nuclear export signal motif lies at 2363–2372 (IVVSLARLPL). A disordered region spans residues 2601–2628 (EEEWDEEEEEEADAPAPTSPPVSPVNSR). A compositionally biased stretch (acidic residues) spans 2602 to 2613 (EEWDEEEEEEAD).

The protein belongs to the huntingtin family. Interacts with PFN1. Interacts through its N-terminus with PRPF40A. Interacts with PQBP1. Interacts with SETD2. Interacts with SH3GLB1. Interacts with SYVN. Interacts with TPR; the interaction is inhibited by forms of Huntingtin with expanded polyglutamine stretch. Interacts with ZDHHC13 (via ANK repeats). Interacts with ZDHHC17 (via ANK repeats). Interacts with F8A1/F8A2/F8A3. Found in a complex with F8A1/F8A2/F8A3, HTT and RAB5A; mediates the recruitment of HTT by RAB5A. Post-translationally, phosphorylation at Ser-1150 and Ser-1170 by CDK5 in response to DNA damage in nuclei of neurons protects neurons against polyglutamine expansion as well as DNA damage mediated toxicity. In terms of processing, cleaved by caspases downstream of the polyglutamine stretch. Myristoylated at Gly-522, following proteolytic cleavage at Asp-521. Expressed to a high degree in all the regions of the brain of adults and in meiotic cells of the testis. In addition, very low levels are detected in various non-neuronal tissues (heart, muscle, liver, lung and kidney).

It is found in the cytoplasm. It localises to the nucleus. The protein resides in the cytoplasmic vesicle. The protein localises to the autophagosome. Functionally, may play a role in microtubule-mediated transport or vesicle function. Promotes the formation of autophagic vesicles. The protein is Huntingtin (Htt) of Rattus norvegicus (Rat).